The primary structure comprises 762 residues: Dolichyl-phosphate-mannose--protein mannosyltransferase 4 (762 aa).

Residues 1–10 show a composition bias toward basic residues; sequence MSVPKKRNHG. Residues 1–24 form a disordered region; it reads MSVPKKRNHGKLPPSTKDVDDPSL. Over 1 to 53 the chain is Lumenal; the sequence is MSVPKKRNHGKLPPSTKDVDDPSLKYTKAAPKCEQVAEHWLLQPLPEPESRYS. A helical membrane pass occupies residues 54–74; that stretch reads FWVTIVTLLAFAARFYKIWYP. Topologically, residues 75–136 are cytoplasmic; sequence KEVVFDEVHF…IGYSYETHPA (62 aa). A helical transmembrane segment spans residues 137-157; that stretch reads PYIAYRSFNAILGTLTVPIMF. The Lumenal portion of the chain corresponds to 158–166; the sequence is NTLKELNFR. Residues 167 to 187 form a helical membrane-spanning segment; that stretch reads AITCAFASLLVAIDTAHVTET. At 188-189 the chain is on the cytoplasmic side; that stretch reads RL. Residues 190–210 traverse the membrane as a helical segment; the sequence is ILLDAILIISIAATMYCYVRF. The Lumenal portion of the chain corresponds to 211–217; that stretch reads YKCQLRQ. The chain crosses the membrane as a helical span at residues 218 to 238; sequence PFTWSWYIWLHATGLSLSFVI. The Cytoplasmic portion of the chain corresponds to 239-242; the sequence is STKY. A helical membrane pass occupies residues 243 to 263; sequence VGVMTYSAIGFAAVVNLWQLL. At 264 to 283 the chain is on the lumenal side; the sequence is DIKAGLSLRQFMRHFSKRLN. The helical transmembrane segment at 284-304 threads the bilayer; the sequence is GLVLIPFVIYLFWFWVHFTVL. The Cytoplasmic segment spans residues 305–593; that stretch reads NTSGPGDAFM…NGDEKKQIYF (289 aa). 3 consecutive MIR domains span residues 331-391, 399-458, and 464-521; these read SKTV…VLPP, GQAV…FQPL, and GHVL…VDEI. A helical transmembrane segment spans residues 594 to 614; the sequence is IGNIIGWWFQVISLAVFVGII. Residues 615–635 are Lumenal-facing; sequence VADLITRHRGYYALNKMTREK. The helical transmembrane segment at 636 to 656 threads the bilayer; it reads LYGPLMFFFVSWCCHYFPFFL. Over 657–716 the chain is Cytoplasmic; it reads MARQKFLHHYLPAHLIACLFSGALWEVIFSDCKSLDLEKDEDISGASYERNPKVYVKPYT. Residues 717 to 737 form a helical membrane-spanning segment; that stretch reads VFLVCVSCAVAWFFVYFSPLV. Residues 738 to 762 are Lumenal-facing; that stretch reads YGDVSLSPSEVVSREWFDIELNFSK. N-linked (GlcNAc...) asparagine glycosylation occurs at asparagine 759.

Belongs to the glycosyltransferase 39 family. Forms a functional homodimer and may form a heterodimer with PMT6. Interacts with RCR1.

It is found in the endoplasmic reticulum membrane. The catalysed reaction is a di-trans,poly-cis-dolichyl beta-D-mannosyl phosphate + L-seryl-[protein] = 3-O-(alpha-D-mannosyl)-L-seryl-[protein] + a di-trans,poly-cis-dolichyl phosphate + H(+). The enzyme catalyses a di-trans,poly-cis-dolichyl beta-D-mannosyl phosphate + L-threonyl-[protein] = 3-O-(alpha-D-mannosyl)-L-threonyl-[protein] + a di-trans,poly-cis-dolichyl phosphate + H(+). It participates in protein modification; protein glycosylation. Functionally, protein O-mannosyltransferase involved in O-glycosylation which is essential for cell wall rigidity. Forms a homodimeric complex to transfer mannose from Dol-P-mannose to Ser or Thr residues on proteins. Specifically acts on secretory proteins with an ER-luminally oriented Ser/Thr-rich region flanked by a membrane anchor such as FUS1, AXL2, GAS1, KEX2, MID2, WSC1, WSC2, OPY2, PRM5, RAX2, or YNL176. The sequence is that of Dolichyl-phosphate-mannose--protein mannosyltransferase 4 from Saccharomyces cerevisiae (strain ATCC 204508 / S288c) (Baker's yeast).